We begin with the raw amino-acid sequence, 280 residues long: Shikimate dehydrogenase (NADP(+)) (280 aa).

Shikimate contacts are provided by residues 15 to 17 (SMS) and threonine 62. Lysine 66 (proton acceptor) is an active-site residue. Glutamate 78 is an NADP(+) binding site. The shikimate site is built by asparagine 87 and aspartate 102. NADP(+)-binding positions include 127–131 (GAGGA), 151–156 (NRTLEK), and isoleucine 219. Position 221 (tyrosine 221) interacts with shikimate. NADP(+) is bound at residue glycine 242.

This sequence belongs to the shikimate dehydrogenase family. As to quaternary structure, homodimer.

The enzyme catalyses shikimate + NADP(+) = 3-dehydroshikimate + NADPH + H(+). It participates in metabolic intermediate biosynthesis; chorismate biosynthesis; chorismate from D-erythrose 4-phosphate and phosphoenolpyruvate: step 4/7. Involved in the biosynthesis of the chorismate, which leads to the biosynthesis of aromatic amino acids. Catalyzes the reversible NADPH linked reduction of 3-dehydroshikimate (DHSA) to yield shikimate (SA). In Bacillus subtilis (strain 168), this protein is Shikimate dehydrogenase (NADP(+)).